The primary structure comprises 334 residues: Atypical chemokine receptor 1 (334 aa).

The Extracellular portion of the chain corresponds to 1–61 (MGNCLYPVET…CNLLDRSSLP (61 aa)). 3 N-linked (GlcNAc...) asparagine glycosylation sites follow: N16, N26, and N32. Cystine bridges form between C49/C274 and C127/C193. The chain crosses the membrane as a helical span at residues 62 to 82 (FFMLTSVLGMLASGSILFAIL). The Cytoplasmic segment spans residues 83–93 (RPFFHWQICPS). Residues 94-114 (WPILAELAVGSALFSIAVPIL) form a helical membrane-spanning segment. Over 115–127 (APGLHSAHSTALC) the chain is Extracellular. Residues 128–151 (NLGYWVWYTSAFAQALLIGCYACL) form a helical membrane-spanning segment. Topologically, residues 152–164 (NPRLNIGQLRGFT) are cytoplasmic. The chain crosses the membrane as a helical span at residues 165 to 185 (LGLSVGLWGAAALSGLPVALA). Residues 186-205 (SDVYNGFCTFPSSRDMEALK) are Extracellular-facing. Residues 206–226 (YTHYAICFTIFTVLPLTLLAA) traverse the membrane as a helical segment. Topologically, residues 227 to 242 (KGLKIALSKGPGPWVS) are cytoplasmic. A helical transmembrane segment spans residues 243–263 (VLWIWFIFWWPHGMVLIFDAL). Over 264-285 (VRSKTVLLYTCQSQKILDAMLN) the chain is Extracellular. N285 is a glycosylation site (N-linked (GlcNAc...) asparagine). The helical transmembrane segment at 286-306 (VTEALSMLHCVATPLLLALFC) threads the bilayer. The Cytoplasmic segment spans residues 307–334 (HQTTRRSLSSLSLPTRQASQMDALAGKS).

This sequence belongs to the G-protein coupled receptor 1 family. Atypical chemokine receptor subfamily. In terms of tissue distribution, expressed in liver and brain.

Its subcellular location is the early endosome. The protein resides in the recycling endosome. It localises to the membrane. Functionally, atypical chemokine receptor that controls chemokine levels and localization via high-affinity chemokine binding that is uncoupled from classic ligand-driven signal transduction cascades, resulting instead in chemokine sequestration, degradation, or transcytosis. Also known as interceptor (internalizing receptor) or chemokine-scavenging receptor or chemokine decoy receptor. Has a promiscuous chemokine-binding profile, interacting with inflammatory chemokines of both the CXC and the CC subfamilies but not with homeostatic chemokines. Acts as a receptor for chemokines including CCL2, CCL5, CCL7, CCL11, CCL13, CCL14, CCL17, CXCL5, CXCL6, IL8/CXCL8, CXCL11, GRO, RANTES, MCP-1 and TARC. May regulate chemokine bioavailability and, consequently, leukocyte recruitment through two distinct mechanisms: when expressed in endothelial cells, it sustains the abluminal to luminal transcytosis of tissue-derived chemokines and their subsequent presentation to circulating leukocytes; when expressed in erythrocytes, serves as blood reservoir of cognate chemokines but also as a chemokine sink, buffering potential surges in plasma chemokine levels. (Microbial infection) Acts as a receptor for the malaria parasite Plasmodium yoelii in mature erythrocytes but not reticulocytes. In Mus musculus (Mouse), this protein is Atypical chemokine receptor 1 (Ackr1).